The sequence spans 239 residues: Guanylate kinase (239 aa).

One can recognise a Guanylate kinase-like domain in the interval 55–235; sequence GRIFVITGPS…TLAELQAILL (181 aa). 62–69 contacts ATP; the sequence is GPSGVGKS.

It belongs to the guanylate kinase family.

Its subcellular location is the cytoplasm. The catalysed reaction is GMP + ATP = GDP + ADP. In terms of biological role, essential for recycling GMP and indirectly, cGMP. The sequence is that of Guanylate kinase (gmk) from Mycoplasma pneumoniae (strain ATCC 29342 / M129 / Subtype 1) (Mycoplasmoides pneumoniae).